Consider the following 281-residue polypeptide: Protease HtpX homolog (281 aa).

2 helical membrane-spanning segments follow: residues 6-26 and 28-48; these read VWLL…AIGG and SGAL…YYYS. Residue histidine 130 coordinates Zn(2+). The active site involves glutamate 131. Position 134 (histidine 134) interacts with Zn(2+). 2 helical membrane passes run 140 to 160 and 181 to 201; these read VLIG…SNIV and IASL…QLAI. A Zn(2+)-binding site is contributed by glutamate 206.

It belongs to the peptidase M48B family. Zn(2+) serves as cofactor.

The protein localises to the cell membrane. This is Protease HtpX homolog from Pelotomaculum thermopropionicum (strain DSM 13744 / JCM 10971 / SI).